A 75-amino-acid polypeptide reads, in one-letter code: Antimicrobial peptide ctriporin (75 aa).

Positions 1 to 22 (MDSKYLFVFLIFNVIVIDLCQG) are cleaved as a signal peptide. Position 41 is a lysine amide (lysine 41). Residues 47–75 (ELGSQYDYLQDFRKRELDLDDLLSKFPDY) constitute a propeptide that is removed on maturation.

This sequence belongs to the non-disulfide-bridged peptide (NDBP) superfamily. Short antimicrobial peptide (group 4) family. Expressed by the venom gland.

It localises to the secreted. The protein localises to the target cell membrane. Functionally, antimicrobial peptide that acts by breaking the cell wall. Is active against Gram-positive bacteria, fungi and antibiotic-resistant pathogens: S.aureus (MIC=5 ug/ml), M.luteus (MIC=5 ug/ml), B.thuringiensis (MIC=10 ug/ml), B.subtilis (MIC=10 ug/ml), C.albicans (MIC=20 ug/ml), methicillin-resistant S.aureus (MIC=5-10 ug/ml), and penicillin-resistant S.epidermidis (MIC=10 ug/ml). Also shows potent activity against antibiotic-sensitive and -resistant Acinetobacter baumannii (MIC=10-20 uM). Shows cytolytic activity against human erythrocytes. In vivo, is efficient in curing staphylococcal skin infection in mice, when externally applied. In Chaerilus tricostatus (Scorpion), this protein is Antimicrobial peptide ctriporin.